A 175-amino-acid chain; its full sequence is Translation initiation factor IF-3, chloroplastic (175 aa).

The protein belongs to the IF-3 family. As to quaternary structure, monomer.

It localises to the plastid. It is found in the chloroplast. Its function is as follows. IF-3 binds to the 30S ribosomal subunit and shifts the equilibrium between 70S ribosomes and their 50S and 30S subunits in favor of the free subunits, thus enhancing the availability of 30S subunits on which protein synthesis initiation begins. This chain is Translation initiation factor IF-3, chloroplastic, found in Cyanidioschyzon merolae (strain NIES-3377 / 10D) (Unicellular red alga).